We begin with the raw amino-acid sequence, 446 residues long: Tubulin alpha-2 chain (446 aa).

The MREC motif motif lies at 1-4 (MREC). Q11, E68, S137, G141, T142, S176, N203, and N225 together coordinate GTP. Residue E68 participates in Mg(2+) binding. Residue E251 is part of the active site.

This sequence belongs to the tubulin family. As to quaternary structure, dimer of alpha and beta chains. A typical microtubule is a hollow water-filled tube with an outer diameter of 25 nm and an inner diameter of 15 nM. Alpha-beta heterodimers associate head-to-tail to form protofilaments running lengthwise along the microtubule wall with the beta-tubulin subunit facing the microtubule plus end conferring a structural polarity. Microtubules usually have 13 protofilaments but different protofilament numbers can be found in some organisms and specialized cells. Requires Mg(2+) as cofactor. Some glutamate residues at the C-terminus are polyglycylated, resulting in polyglycine chains on the gamma-carboxyl group. Glycylation is mainly limited to tubulin incorporated into axonemes (cilia and flagella) whereas glutamylation is prevalent in neuronal cells, centrioles, axonemes, and the mitotic spindle. Both modifications can coexist on the same protein on adjacent residues, and lowering polyglycylation levels increases polyglutamylation, and reciprocally. The precise function of polyglycylation is still unclear. Post-translationally, some glutamate residues at the C-terminus are polyglutamylated, resulting in polyglutamate chains on the gamma-carboxyl group. Polyglutamylation plays a key role in microtubule severing by spastin (SPAST). SPAST preferentially recognizes and acts on microtubules decorated with short polyglutamate tails: severing activity by SPAST increases as the number of glutamates per tubulin rises from one to eight, but decreases beyond this glutamylation threshold. Testis specific.

It is found in the cytoplasm. Its subcellular location is the cytoskeleton. The enzyme catalyses GTP + H2O = GDP + phosphate + H(+). Tubulin is the major constituent of microtubules, a cylinder consisting of laterally associated linear protofilaments composed of alpha- and beta-tubulin heterodimers. Microtubules grow by the addition of GTP-tubulin dimers to the microtubule end, where a stabilizing cap forms. Below the cap, tubulin dimers are in GDP-bound state, owing to GTPase activity of alpha-tubulin. This Gallus gallus (Chicken) protein is Tubulin alpha-2 chain.